A 379-amino-acid polypeptide reads, in one-letter code: Alcohol dehydrogenase class-P (379 aa).

S2 carries the post-translational modification N-acetylserine. A Zn(2+)-binding site is contributed by C47. Position 49 (T49) interacts with an alcohol. NAD(+) is bound at residue T49. Residues D50, H69, E70, C99, C102, C105, C113, and C177 each coordinate Zn(2+). H69 serves as a coordination point for an alcohol. The NAD(+) site is built by V206 and D226. The residue at position 229 (S229) is a Phosphoserine. Residues R231, T272, V295, V297, T320, F322, and R372 each coordinate NAD(+).

The protein belongs to the zinc-containing alcohol dehydrogenase family. Class-P subfamily. In terms of assembly, homodimer. Requires Zn(2+) as cofactor. Post-translationally, glutathionylated. As to expression, root specific. Also detected in etiolated seedlings and leaves in cold conditions.

Its subcellular location is the cytoplasm. The enzyme catalyses a primary alcohol + NAD(+) = an aldehyde + NADH + H(+). It catalyses the reaction a secondary alcohol + NAD(+) = a ketone + NADH + H(+). The catalysed reaction is ethanol + NAD(+) = acetaldehyde + NADH + H(+). Its activity is regulated as follows. Alcohol dehydrogenase activity show inverse correlation with the decreasing availability of oxygen. Slightly repressed by thiol-modifying agents N-ethylmaleimide (NEM) and 5,5-dithio-bis-(2-nitrobenzoic acid) (DTNB), as well as by methyl methanethiosulfonate (MMTS) in a dose-dependent manner. Inhibited by hydrogen peroxide H(2)O(2). Its function is as follows. Alcohol dehydrogenase catalyzing the reduction of toxic aldehydes to the corresponding alcohols. Mostly active on ethanol (EtOH), but exhibits broad substrate selectivity for primary and secondary alcohols (e.g. cinnamyl alcohol, octanol, geraniol, butanol, propyl alcohol, pentanol, isopentanol, ethylene glycol, isopropanol, methanol and tertiary butyl alcohol). Also catalyzes the reverse reaction to convert allyl alcohol to highly toxic acryl-aldehyde. Required for survival and acclimation in hypoxic conditions, especially in roots. Not able to catalyze NADH-dependent degradation of S-nitrosoglutathione (GSNO). The polypeptide is Alcohol dehydrogenase class-P (Arabidopsis thaliana (Mouse-ear cress)).